A 529-amino-acid polypeptide reads, in one-letter code: BAR/IMD domain-containing adapter protein 2-like 2 (529 aa).

Residues 1-239 (MAPEMDQFYR…HSPGLLGPVL (239 aa)) enclose the IMD domain. Disordered stretches follow at residues 221–332 (EASR…GGAR) and 399–529 (NPLN…PLIR). Phosphoserine is present on residues S231, S272, and S304. Low complexity predominate over residues 301–317 (SASSLYSSSTQRSRSNS). Positions 321–331 (RPGGGGGGGGA) are enriched in gly residues. Residues 329-392 (GGARRVRALV…PEAYVKPLDE (64 aa)) form the SH3 domain. Over residues 439 to 459 (GNSTASSDYWDGQSRSRTPSH) the composition is skewed to polar residues. The segment covering 473 to 484 (PSSRRSSMGSMG) has biased composition (low complexity). Residues S479 and S482 each carry the phosphoserine modification.

It is found in the cell membrane. It localises to the cell junction. The protein resides in the cytoplasmic vesicle membrane. Its function is as follows. Phosphoinositides-binding protein that induces the formation of planar or gently curved membrane structures. Binds to phosphoinositides, including to phosphatidylinositol 4,5-bisphosphate (PtdIns(4,5)P2) headgroups. There seems to be no clear preference for a specific phosphoinositide. In Bos taurus (Bovine), this protein is BAR/IMD domain-containing adapter protein 2-like 2 (BAIAP2L2).